The primary structure comprises 603 residues: DNA mismatch repair protein MutL (603 aa).

Positions 336–346 (EVSKKQKEQQK) are enriched in basic and acidic residues. 2 disordered regions span residues 336 to 355 (EVSK…MSFE) and 361 to 384 (KETP…DTSR).

The protein belongs to the DNA mismatch repair MutL/HexB family.

This protein is involved in the repair of mismatches in DNA. It is required for dam-dependent methyl-directed DNA mismatch repair. May act as a 'molecular matchmaker', a protein that promotes the formation of a stable complex between two or more DNA-binding proteins in an ATP-dependent manner without itself being part of a final effector complex. The protein is DNA mismatch repair protein MutL of Listeria welshimeri serovar 6b (strain ATCC 35897 / DSM 20650 / CCUG 15529 / CIP 8149 / NCTC 11857 / SLCC 5334 / V8).